The chain runs to 244 residues: Type III pantothenate kinase (244 aa).

7–14 (DIGNTRLK) contacts ATP. Residues Y95 and 102–105 (GIDR) contribute to the substrate site. D104 (proton acceptor) is an active-site residue. T126 provides a ligand contact to ATP. T177 is a substrate binding site.

It belongs to the type III pantothenate kinase family. Homodimer. Requires NH4(+) as cofactor. It depends on K(+) as a cofactor.

The protein localises to the cytoplasm. The catalysed reaction is (R)-pantothenate + ATP = (R)-4'-phosphopantothenate + ADP + H(+). It functions in the pathway cofactor biosynthesis; coenzyme A biosynthesis; CoA from (R)-pantothenate: step 1/5. In terms of biological role, catalyzes the phosphorylation of pantothenate (Pan), the first step in CoA biosynthesis. The protein is Type III pantothenate kinase of Acinetobacter baumannii (strain ACICU).